Consider the following 491-residue polypeptide: Cytosolic Fe-S cluster assembly factor NAR1 (491 aa).

8 residues coordinate [4Fe-4S] cluster: C20, C65, C68, C71, C177, C232, C414, and C418.

This sequence belongs to the NARF family.

Component of the cytosolic Fe/S protein assembly machinery. Required for maturation of extramitochondrial Fe/S proteins. May play a role in the transfer of pre-assembled Fe/S clusters to target apoproteins. In Yarrowia lipolytica (strain CLIB 122 / E 150) (Yeast), this protein is Cytosolic Fe-S cluster assembly factor NAR1 (NAR1).